The sequence spans 557 residues: Urocanate hydratase (557 aa).

Residues G53 to G54, Q131, G177 to G179, D197, R202, N243 to A244, Q264 to H268, Y274 to L275, and Y323 each bind NAD(+). C411 is a catalytic residue. G493 contributes to the NAD(+) binding site.

It belongs to the urocanase family. The cofactor is NAD(+).

The protein localises to the cytoplasm. The enzyme catalyses 4-imidazolone-5-propanoate = trans-urocanate + H2O. The protein operates within amino-acid degradation; L-histidine degradation into L-glutamate; N-formimidoyl-L-glutamate from L-histidine: step 2/3. Catalyzes the conversion of urocanate to 4-imidazolone-5-propionate. In Hahella chejuensis (strain KCTC 2396), this protein is Urocanate hydratase.